Consider the following 165-residue polypeptide: uncharacterized protein (165 aa).

The 165-residue stretch at 1-165 (MDIKVVKGSI…EAWEKVLGLR (165 aa)) folds into the Macro domain.

This is an uncharacterized protein from Aquifex aeolicus (strain VF5).